The sequence spans 285 residues: Putative cysteine-rich repeat secretory protein 14 (285 aa).

The first 30 residues, 1-30 (MSSFCLSKHLILVPILVMMAQLLLIRNVLS), serve as a signal peptide directing secretion. Gnk2-homologous domains are found at residues 37–143 (YLYH…SIST) and 161–273 (RPNA…RYPF).

This sequence belongs to the cysteine-rich repeat secretory protein family.

The protein resides in the secreted. This is Putative cysteine-rich repeat secretory protein 14 (CRRSP14) from Arabidopsis thaliana (Mouse-ear cress).